A 588-amino-acid polypeptide reads, in one-letter code: Retrograde regulation protein 2 (588 aa).

It belongs to the GppA/Ppx family.

In terms of biological role, required for a novel path of interorganelle communication between mitochondria, peroxisomes and the nucleus, thereby maintaining a functional metabolic interaction between the tricarboxylic acid and glyoxylate cycles. In particular, required for the retrograde expression of the peroxisomal isoform of citrate synthase, CIT2. The sequence is that of Retrograde regulation protein 2 (RTG2) from Saccharomyces cerevisiae (strain ATCC 204508 / S288c) (Baker's yeast).